The primary structure comprises 162 residues: Calcium-binding protein 4b (162 aa).

EF-hand domains follow at residues 10–45 (ELTNATNEAIKAADKNGDNQLSKKEVNDMYKKCKYP), 46–81 (NPTLATNSLFELFDLDKDGKLSVNEVKTAVLVDYII), 85–120 (TCLKKFVDIIFKADSNKDNKITWDEARQYFITSGSN), and 123–158 (QAKVLANSMFEDVDSDDDKCITREELREYAIEYFEI). Residues aspartate 23, asparagine 25, aspartate 27, glutamine 29, glutamate 34, aspartate 59, aspartate 61, aspartate 63, lysine 65, and glutamate 70 each coordinate Ca(2+). Ca(2+) contacts are provided by aspartate 136, aspartate 138, aspartate 140, cysteine 142, and glutamate 147.

This chain is Calcium-binding protein 4b (cbpD2), found in Dictyostelium discoideum (Social amoeba).